The primary structure comprises 500 residues: Protein nucleotidyltransferase YdiU (500 aa).

Gly-96, Gly-98, Arg-99, Lys-119, Asp-131, Gly-132, Arg-182, and Arg-189 together coordinate ATP. The active-site Proton acceptor is Asp-258. The Mg(2+) site is built by Asn-259 and Asp-268. Asp-268 contributes to the ATP binding site.

It belongs to the SELO family. Requires Mg(2+) as cofactor. Mn(2+) serves as cofactor.

It catalyses the reaction L-seryl-[protein] + ATP = 3-O-(5'-adenylyl)-L-seryl-[protein] + diphosphate. It carries out the reaction L-threonyl-[protein] + ATP = 3-O-(5'-adenylyl)-L-threonyl-[protein] + diphosphate. The enzyme catalyses L-tyrosyl-[protein] + ATP = O-(5'-adenylyl)-L-tyrosyl-[protein] + diphosphate. The catalysed reaction is L-histidyl-[protein] + UTP = N(tele)-(5'-uridylyl)-L-histidyl-[protein] + diphosphate. It catalyses the reaction L-seryl-[protein] + UTP = O-(5'-uridylyl)-L-seryl-[protein] + diphosphate. It carries out the reaction L-tyrosyl-[protein] + UTP = O-(5'-uridylyl)-L-tyrosyl-[protein] + diphosphate. In terms of biological role, nucleotidyltransferase involved in the post-translational modification of proteins. It can catalyze the addition of adenosine monophosphate (AMP) or uridine monophosphate (UMP) to a protein, resulting in modifications known as AMPylation and UMPylation. The sequence is that of Protein nucleotidyltransferase YdiU from Rhizobium etli (strain CIAT 652).